The primary structure comprises 203 residues: Coupling of ubiquitin conjugation to ER degradation protein 1 (203 aa).

Topologically, residues 1-6 are lumenal; it reads MEDSRL. The helical transmembrane segment at 7 to 23 threads the bilayer; sequence LITLILVFGVIFLKKFF. Topologically, residues 24 to 203 are cytoplasmic; sequence QSNQHPSAQR…SDKDLQSLLT (180 aa). The tract at residues 36-61 is disordered; that stretch reads ATGVNAHGRPQGSTQNALRRTGRVNG. A CUE domain is found at 65–107; it reads VTTQMVETVQNLAPNLHPEQIRYSLENTGSVEETVERYLRGDE.

The protein belongs to the CUE1 family. In terms of assembly, forms a heterodimer with UBC7. Interacts with SSM4/DOA10 and UBX2/SEL1.

The protein resides in the endoplasmic reticulum membrane. Component of the endoplasmic reticulum-associated protein degradation (ERAD) pathway. Recruits the soluble ubiquitin-conjugating enzyme UBC7 to the cytoplasmic face of the endoplasmic reticulum membrane where it functions in degradation of misfolded or regulated proteins localized in the endoplasmic reticulum (ER) lumen or membrane via the ubiquitin-proteasome system. Targets the E2 conjugating enzyme UBC7 to the DOA10 ubiquitin ligase complex, which is part of the ERAD-C pathway responsible for the rapid degradation of membrane proteins with misfolded cytoplasmic domains, and to the HRD1 ubiquitin ligase complex, which is part of the ERAD-L and ERAD-M pathways responsible for the rapid degradation of soluble lumenal and membrane proteins with misfolded lumenal domains (ERAD-L), or ER-membrane proteins with misfolded transmembrane domains (ERAD-M). Also has a role in cold adaptation, perhaps through effects on sterol biosynthesis. This chain is Coupling of ubiquitin conjugation to ER degradation protein 1 (CUE1), found in Saccharomyces cerevisiae (strain ATCC 204508 / S288c) (Baker's yeast).